The sequence spans 867 residues: Leucine--tRNA ligase (867 aa).

Positions 43 to 53 (PYPSGRLHMGH) match the 'HIGH' region motif. The 'KMSKS' region signature appears at 627 to 631 (KMSKS). K630 contacts ATP.

This sequence belongs to the class-I aminoacyl-tRNA synthetase family.

Its subcellular location is the cytoplasm. It catalyses the reaction tRNA(Leu) + L-leucine + ATP = L-leucyl-tRNA(Leu) + AMP + diphosphate. This is Leucine--tRNA ligase from Phenylobacterium zucineum (strain HLK1).